Consider the following 530-residue polypeptide: Light-independent protochlorophyllide reductase subunit B (530 aa).

Asp-36 lines the [4Fe-4S] cluster pocket. The active-site Proton donor is the Asp-287. 422 to 423 (GL) lines the substrate pocket. Positions 453–472 (PAVQTASSEPQPSAIETPSA) are disordered. The segment covering 454 to 463 (AVQTASSEPQ) has biased composition (polar residues).

Belongs to the ChlB/BchB/BchZ family. Protochlorophyllide reductase is composed of three subunits; BchL, BchN and BchB. Forms a heterotetramer of two BchB and two BchN subunits. [4Fe-4S] cluster serves as cofactor.

It catalyses the reaction chlorophyllide a + oxidized 2[4Fe-4S]-[ferredoxin] + 2 ADP + 2 phosphate = protochlorophyllide a + reduced 2[4Fe-4S]-[ferredoxin] + 2 ATP + 2 H2O. It functions in the pathway porphyrin-containing compound metabolism; bacteriochlorophyll biosynthesis (light-independent). In terms of biological role, component of the dark-operative protochlorophyllide reductase (DPOR) that uses Mg-ATP and reduced ferredoxin to reduce ring D of protochlorophyllide (Pchlide) to form chlorophyllide a (Chlide). This reaction is light-independent. The NB-protein (BchN-BchB) is the catalytic component of the complex. This chain is Light-independent protochlorophyllide reductase subunit B, found in Rhodopseudomonas palustris (strain BisB18).